The primary structure comprises 122 residues: Large ribosomal subunit protein uL14 (122 aa).

Belongs to the universal ribosomal protein uL14 family. As to quaternary structure, part of the 50S ribosomal subunit. Forms a cluster with proteins L3 and L19. In the 70S ribosome, L14 and L19 interact and together make contacts with the 16S rRNA in bridges B5 and B8.

In terms of biological role, binds to 23S rRNA. Forms part of two intersubunit bridges in the 70S ribosome. The protein is Large ribosomal subunit protein uL14 of Exiguobacterium sibiricum (strain DSM 17290 / CCUG 55495 / CIP 109462 / JCM 13490 / 255-15).